Reading from the N-terminus, the 175-residue chain is uncharacterized protein (175 aa).

Basic and acidic residues predominate over residues 1 to 17 (MKVEGGESMHESEEGRD). The tract at residues 1–21 (MKVEGGESMHESEEGRDVPNG) is disordered.

This is an uncharacterized protein from Bacillus thuringiensis subsp. kurstaki.